Here is a 583-residue protein sequence, read N- to C-terminus: CTP synthase (583 aa).

The interval 1-278 is amidoligase domain; the sequence is MRRHPQTATK…DAFVVRRLNL (278 aa). Residue serine 20 participates in CTP binding. Serine 20 is a UTP binding site. Residues 21 to 26 and aspartate 78 each bind ATP; that span reads SLGKGL. 2 residues coordinate Mg(2+): aspartate 78 and glutamate 152. CTP is bound by residues 159–161, 199–204, and lysine 235; these read DIE and KTKPTQ. UTP-binding positions include 199–204 and lysine 235; that span reads KTKPTQ. In terms of domain architecture, Glutamine amidotransferase type-1 spans 303-551; that stretch reads RIALVGKYVE…VKAAIDYKEG (249 aa). L-glutamine is bound at residue glycine 366. Residue cysteine 393 is the Nucleophile; for glutamine hydrolysis of the active site. Residues 394-397, glutamate 416, and arginine 477 contribute to the L-glutamine site; that span reads LGLQ. Catalysis depends on residues histidine 524 and glutamate 526. A disordered region spans residues 559–583; it reads PERVSNGAERRDQVGQSIPEPANRG.

The protein belongs to the CTP synthase family. As to quaternary structure, homotetramer.

The enzyme catalyses UTP + L-glutamine + ATP + H2O = CTP + L-glutamate + ADP + phosphate + 2 H(+). It carries out the reaction L-glutamine + H2O = L-glutamate + NH4(+). It catalyses the reaction UTP + NH4(+) + ATP = CTP + ADP + phosphate + 2 H(+). The protein operates within pyrimidine metabolism; CTP biosynthesis via de novo pathway; CTP from UDP: step 2/2. Allosterically activated by GTP, when glutamine is the substrate; GTP has no effect on the reaction when ammonia is the substrate. The allosteric effector GTP functions by stabilizing the protein conformation that binds the tetrahedral intermediate(s) formed during glutamine hydrolysis. Inhibited by the product CTP, via allosteric rather than competitive inhibition. Its function is as follows. Catalyzes the ATP-dependent amination of UTP to CTP with either L-glutamine or ammonia as the source of nitrogen. Regulates intracellular CTP levels through interactions with the four ribonucleotide triphosphates. The polypeptide is CTP synthase (Mycobacterium marinum (strain ATCC BAA-535 / M)).